The chain runs to 203 residues: Glycerol-3-phosphate acyltransferase (203 aa).

A run of 4 helical transmembrane segments spans residues 1-21 (MIQT…LGAI), 84-104 (WLQV…VWLG), 117-137 (IFLG…MAVI), and 157-179 (LMLL…LMVL).

Belongs to the PlsY family. Probably interacts with PlsX.

Its subcellular location is the cell inner membrane. The enzyme catalyses an acyl phosphate + sn-glycerol 3-phosphate = a 1-acyl-sn-glycero-3-phosphate + phosphate. It functions in the pathway lipid metabolism; phospholipid metabolism. Its function is as follows. Catalyzes the transfer of an acyl group from acyl-phosphate (acyl-PO(4)) to glycerol-3-phosphate (G3P) to form lysophosphatidic acid (LPA). This enzyme utilizes acyl-phosphate as fatty acyl donor, but not acyl-CoA or acyl-ACP. The sequence is that of Glycerol-3-phosphate acyltransferase from Synechococcus sp. (strain CC9605).